The following is a 1019-amino-acid chain: Limulus clotting factor C (1019 aa).

The signal sequence occupies residues 1–25; the sequence is MVLASFLVSGLVLGLLAQKMRPVQS. Positions 102–137 constitute an EGF-like domain; sequence YGTWCSGECQCKNGGICDQRTGACACRDRYEGVHCE. Intrachain disulfides connect C106-C118, C112-C125, C127-C136, C142-C182, C168-C195, C199-C241, C227-C254, C260-C308, C294-C321, C331-C350, C354-C374, C436-C447, C464-C564, C538-C556, C576-C621, C607-C634, and C720-C748. Sushi domains lie at 140–197, 198–256, and 258–323; these read KGCP…KCIR, ECAM…QCKN, and VFCP…SCVK. In terms of domain architecture, LCCL spans 325–421; sequence ADREVDCDSK…EELKSLARSF (97 aa). The C-type lectin domain occupies 436–568; it reads CPDGWFEVDE…PSSFACMMDL (133 aa). 2 N-linked (GlcNAc...) asparagine glycosylation sites follow: N523 and N534. Sushi domains are found at residues 574–636 and 689–750; these read AKCD…RCIK and PRSS…SCIP. 3 N-linked (GlcNAc...) asparagine glycosylation sites follow: N624, N740, and N767. The Peptidase S1 domain maps to 763–1019; it reads IWNGNSTEIG…VFLSWIRQFI (257 aa). C794 and C810 are disulfide-bonded. Active-site charge relay system residues include H809 and D865. Residue N912 is glycosylated (N-linked (GlcNAc...) asparagine). C932 and C951 are oxidised to a cystine. D960 serves as a coordination point for substrate. C962 and C996 are oxidised to a cystine. Residue S966 is the Charge relay system of the active site.

Belongs to the peptidase S1 family. Heterodimer of a light chain and a heavy chain linked by a disulfide bond.

It localises to the secreted. It carries out the reaction Selective cleavage of 103-Arg-|-Ser-104 and 124-Ile-|-Ile-125 bonds in Limulus clotting factor B to form activated factor B. Cleavage of -Pro-Arg-|-Xaa- bonds in synthetic substrates.. With respect to regulation, activated by Gram-negative bacterial lipopolysaccharides and chymotrypsin. Functionally, this enzyme is closely associated with an endotoxin-sensitive hemolymph coagulation system which may play important roles in both hemostasis and host defense mechanisms. Its active form catalyzes the activation of factor B. The polypeptide is Limulus clotting factor C (Carcinoscorpius rotundicauda (Mangrove horseshoe crab)).